We begin with the raw amino-acid sequence, 199 residues long: Small ribosomal subunit protein eS6 (199 aa).

The span at 172-183 shows a compositional bias: basic and acidic residues; sequence KEQREKRSESLA. The segment at 172–199 is disordered; the sequence is KEQREKRSESLAKKRSRLSAASKPSIAA.

The protein belongs to the eukaryotic ribosomal protein eS6 family. Ribosomal protein S6 is the major substrate of protein kinases in eukaryote ribosomes.

In terms of biological role, component of the 40S small ribosomal subunit. Plays an important role in controlling cell growth and proliferation through the selective translation of particular classes of mRNA. This chain is Small ribosomal subunit protein eS6 (RPS6), found in Nicotiana tabacum (Common tobacco).